The primary structure comprises 408 residues: Apoptosis-inducing factor homolog A (408 aa).

FAD is bound by residues 34 to 38, Arg69, and Asp314; that span reads GCGFG.

The protein belongs to the FAD-dependent oxidoreductase family. FAD is required as a cofactor.

Its function is as follows. Putative FAD-dependent oxidoreductase. This chain is Apoptosis-inducing factor homolog A (aifA), found in Dictyostelium discoideum (Social amoeba).